Reading from the N-terminus, the 508-residue chain is Pyruvate kinase 2 (508 aa).

Arginine 50 contacts substrate. Residues asparagine 52, serine 54, aspartate 85, and threonine 86 each contribute to the K(+) site. ATP is bound at residue 52–55 (NFSH). Residues arginine 92 and lysine 178 each contribute to the ATP site. Glutamate 243 contacts Mg(2+). Substrate-binding residues include glycine 266, aspartate 267, and threonine 299. Aspartate 267 is a binding site for Mg(2+).

This sequence belongs to the pyruvate kinase family. Homotetramer. The cofactor is Mg(2+). K(+) serves as cofactor.

The catalysed reaction is pyruvate + ATP = phosphoenolpyruvate + ADP + H(+). Its pathway is carbohydrate degradation; glycolysis; pyruvate from D-glyceraldehyde 3-phosphate: step 5/5. The chain is Pyruvate kinase 2 (PYK2) from Candida glabrata (strain ATCC 2001 / BCRC 20586 / JCM 3761 / NBRC 0622 / NRRL Y-65 / CBS 138) (Yeast).